Reading from the N-terminus, the 322-residue chain is Ferredoxin--NADP reductase (322 aa).

FAD contacts are provided by D34, Q42, Y47, V87, F120, D279, and T320.

It belongs to the ferredoxin--NADP reductase type 2 family. As to quaternary structure, homodimer. FAD serves as cofactor.

The enzyme catalyses 2 reduced [2Fe-2S]-[ferredoxin] + NADP(+) + H(+) = 2 oxidized [2Fe-2S]-[ferredoxin] + NADPH. This chain is Ferredoxin--NADP reductase, found in Streptococcus pneumoniae (strain Hungary19A-6).